Here is a 263-residue protein sequence, read N- to C-terminus: Putative SNAP25 homologous protein SNAP30 (263 aa).

Disordered regions lie at residues 1-61 (MFGF…LQSQ) and 132-209 (NLGG…DGLS). 2 stretches are compositionally biased toward polar residues: residues 8 to 34 (PGNNKLPNESSNNKGGTITAGRRTSSE) and 52 to 61 (FNDSGGLQSQ). A compositionally biased stretch (basic and acidic residues) spans 158 to 173 (KPSKKSENHKEEREKL). The span at 180–194 (RSSSQPALDQPTNAL) shows a compositional bias: polar residues. A compositionally biased stretch (basic and acidic residues) spans 197–206 (VEQEKAKQDD). Residues 198-260 (EQEKAKQDDG…QGANQRARHL (63 aa)) form the t-SNARE coiled-coil homology domain.

This sequence belongs to the SNAP-25 family.

Its subcellular location is the membrane. It localises to the cytoplasm. Vesicle trafficking protein that functions in the secretory pathway. The chain is Putative SNAP25 homologous protein SNAP30 (SNAP30) from Arabidopsis thaliana (Mouse-ear cress).